Reading from the N-terminus, the 562-residue chain is MDYKQLVAAALAPALPDLTQEAILDKIEQPKTSKQGDLAFPTFTLAKTLHKAPQMIASDIVEKVDSSDFEKVVAMGPYVNFFFKKDAFAADILNQVLSNGGHFGDAKLGEAGQVPIDMSSPNIAKPISMGHLRSTVIGNSLANILSKLDYQPVKINHLGDWGTQFGKLITAYKMWGSEAEVKADPINNLLKYYVRFHKEDVDHPEMDDEAREWFKKLENGDEEATHLWSWFRSESLKAFKKIYQRLDIDFDSFKGEAFYNDKMQEVVDILEDKHLLQESQGAEVVDLSKYDLNPALIKKSDGATLYITRDLAAAIYRKRTYDFVQSLYVVGNEQTNHFKQLKAVLTEMGFDWADQIHHIPFGLITSGGKKLSTRSGRVILLDKVLDDAVALAHEQIEAKNPDLPNKDEVADAVGIGAVVFHDLKNERMNSFDFNLEEVVRFEGETGPYVQYAHARAESILRKAGSPEIAATEQTLSDPAAWDTLKLLSEFPATVVRASTEYEPSVIAKYAIHLAKAYNKYYANTKILVEDDELNARLALVKSVSIVLKEALRLLGVKAPDEM.

Residues 121–131 (PNIAKPISMGH) carry the 'HIGH' region motif.

This sequence belongs to the class-I aminoacyl-tRNA synthetase family. As to quaternary structure, monomer.

The protein localises to the cytoplasm. The catalysed reaction is tRNA(Arg) + L-arginine + ATP = L-arginyl-tRNA(Arg) + AMP + diphosphate. The polypeptide is Arginine--tRNA ligase (Lactiplantibacillus plantarum (strain ATCC BAA-793 / NCIMB 8826 / WCFS1) (Lactobacillus plantarum)).